The sequence spans 242 residues: MKLLVVKDYEEMSEVAAKIFKEVISEKTNAVLGLATGSTPEGLYKKIIEMNRNKEIDFSNIKTVNLDEYVGLGGEDPQSYRYFMNEKLFNHVNINKANTFVPNGLAKDLDEEAKNYDKKVDELGGIDIQILGIGANGHIAFNEPDDFLIAETHVTGLTKTTIEANSRFFKSIEEVPTKALSMGLGQIMKARKIVLLVRGQDKAEAIKGLFKGNITTHNPATMLHMHKDVTVIIDEEMANAIK.

Asp-67 functions as the Proton acceptor; for enolization step in the catalytic mechanism. Asn-136 serves as the catalytic For ring-opening step. Catalysis depends on His-138, which acts as the Proton acceptor; for ring-opening step. Residue Glu-143 is the For ring-opening step of the active site.

This sequence belongs to the glucosamine/galactosamine-6-phosphate isomerase family. NagB subfamily.

The catalysed reaction is alpha-D-glucosamine 6-phosphate + H2O = beta-D-fructose 6-phosphate + NH4(+). The protein operates within amino-sugar metabolism; N-acetylneuraminate degradation; D-fructose 6-phosphate from N-acetylneuraminate: step 5/5. Its function is as follows. Catalyzes the reversible isomerization-deamination of glucosamine 6-phosphate (GlcN6P) to form fructose 6-phosphate (Fru6P) and ammonium ion. This Clostridium beijerinckii (strain ATCC 51743 / NCIMB 8052) (Clostridium acetobutylicum) protein is Glucosamine-6-phosphate deaminase.